The primary structure comprises 361 residues: Probable G-protein coupled receptor 25 (361 aa).

The Extracellular segment spans residues 1–39; it reads MAPTEPWSPSPGSAPWDYSGLDGLEELELCPAGDLPYGY. A helical membrane pass occupies residues 40-60; the sequence is VYIPALYLAAFAVGLLGNAFV. Residues 61-75 are Cytoplasmic-facing; sequence VWLLAGRRGPRRLVD. A helical membrane pass occupies residues 76-96; the sequence is TFVLHLAAADLGFVLTLPLWA. At 97–126 the chain is on the extracellular side; it reads AAAALGGRWPFGDGLCKLSSFALAGTRCAG. The helical transmembrane segment at 127-147 threads the bilayer; sequence ALLLAGMSVDRYLAVVKLLEA. The Cytoplasmic portion of the chain corresponds to 148–155; it reads RPLRTPRC. A helical transmembrane segment spans residues 156 to 176; sequence ALASCCGVWAVALLAGLPSLV. Residues 177–200 are Extracellular-facing; the sequence is YRGLQPLPGGQDSQCGEEPSHAFQ. Residues 201-220 form a helical membrane-spanning segment; sequence GLSLLLLLLTFVLPLVVTLF. Residues 221–242 are Cytoplasmic-facing; the sequence is CYCRISRRLRRPPHVGRARRNS. The chain crosses the membrane as a helical span at residues 243 to 263; the sequence is LRIIFAIESTFVGSWLPFSAL. The Extracellular portion of the chain corresponds to 264-289; it reads RAVFHLARLGALPLPCPLLLALRWGL. The chain crosses the membrane as a helical span at residues 290–310; the sequence is TIATCLAFVNSCANPLIYLLL. Residues 311–361 are Cytoplasmic-facing; sequence DRSFRARALDGACGRTGRLARRISSASSLSRDDSSVFRCRAQAANTASASW.

This sequence belongs to the G-protein coupled receptor 1 family.

Its subcellular location is the cell membrane. In terms of biological role, orphan receptor. The chain is Probable G-protein coupled receptor 25 (GPR25) from Homo sapiens (Human).